Consider the following 148-residue polypeptide: Macrodomain Ter protein (148 aa).

It belongs to the MatP family. Homodimer.

Its subcellular location is the cytoplasm. Its function is as follows. Required for spatial organization of the terminus region of the chromosome (Ter macrodomain) during the cell cycle. Prevents early segregation of duplicated Ter macrodomains during cell division. Binds specifically to matS, which is a 13 bp signature motif repeated within the Ter macrodomain. The sequence is that of Macrodomain Ter protein from Haemophilus influenzae (strain PittGG).